We begin with the raw amino-acid sequence, 2225 residues long: Multifunctional protein CAD (2225 aa).

Ala2 bears the N-acetylalanine mark. Positions 2–365 (AALVLEDGSV…TVREAAAGNI (364 aa)) are GATase (Glutamine amidotransferase). 3 residues coordinate L-glutamine: Ser44, Gly222, and Gly224. A Glutamine amidotransferase type-1 domain is found at 177 to 363 (RICALDCGLK…LETVREAAAG (187 aa)). Cys252 serves as the catalytic Nucleophile; for GATase activity. Positions 253, 256, 294, 296, and 297 each coordinate L-glutamine. Active-site for GATase activity residues include His336 and Glu338. Residues 366-394 (GGQTVRERLAQRLCPPELPIPGSGLPPPR) are linker. The CPSase A stretch occupies residues 395–933 (KVLILGSGGL…NTHDLDFRAP (539 aa)). The interval 395–1455 (KVLILGSGGL…APPLKVHVDC (1061 aa)) is CPSase (Carbamoyl-phosphate synthase). A Phosphothreonine; by MAPK1 modification is found at Thr456. ATP is bound by residues Arg515, Arg555, Gly561, Gly562, Lys592, Glu599, Gly625, Ile626, His627, Gln668, and Glu682. Residues 519–711 (AARMAEIGEH…LAYVAAKLAL (193 aa)) enclose the ATP-grasp 1 domain. The Mg(2+) site is built by Gln668, Glu682, and Asn684. Gln668, Glu682, and Asn684 together coordinate Mn(2+). The residue at position 747 (Lys747) is an N6-acetyllysine. The CPSase B stretch occupies residues 934–1455 (HVLVLGSGVY…APPLKVHVDC (522 aa)). Phosphoserine is present on Ser1038. The region spanning 1052-1243 (SRLLDTIGIS…LVALATRIIM (192 aa)) is the ATP-grasp 2 domain. Residues Arg1088, Lys1127, Ile1129, Glu1134, Gly1159, Val1160, His1161, Ser1162, Gln1202, and Glu1214 each coordinate ATP. Mg(2+) is bound by residues Gln1202, Glu1214, and Asn1216. Mn(2+) contacts are provided by Gln1202, Glu1214, and Asn1216. Positions 1308–1462 (FKIPEKNILL…VDCMTSQKLV (155 aa)) constitute an MGS-like domain. Phosphoserine; by PKA is present on Ser1406. Lys1411 carries the N6-acetyllysine modification. A DHOase (dihydroorotase) region spans residues 1456-1788 (MTSQKLVRLP…VKGTVRRVVL (333 aa)). Zn(2+)-binding residues include His1471 and His1473. 2 residues coordinate (S)-dihydroorotate: Arg1475 and Asn1505. Zn(2+) is bound by residues Lys1556, His1590, Cys1613, His1614, and Glu1637. An N6-carboxylysine modification is found at Lys1556. Arg1661 is a (S)-dihydroorotate binding site. Asp1686 is a Zn(2+) binding site. Residue Asp1686 is the For DHOase activity of the active site. (S)-dihydroorotate contacts are provided by His1690 and Pro1702. Residues 1789-1917 (RGEVAYIDGQ…GLLHPQMSPL (129 aa)) form a linker region. The disordered stretch occupies residues 1815 to 1885 (GVVPQPPPST…VVEPELMGTP (71 aa)). Residues 1825-1834 (PATTEITTTP) show a composition bias toward low complexity. Ser1859 bears the Phosphoserine mark. A compositionally biased stretch (basic and acidic residues) spans 1866–1878 (EEPKEKPPRKVVE). Thr1884 carries the phosphothreonine modification. Phosphoserine is present on residues Ser1900 and Ser1938. The tract at residues 1918 to 2225 (LHSLVGQHIL…ALLATVLGRF (308 aa)) is ATCase (Aspartate transcarbamylase). Positions 1975 and 1976 each coordinate carbamoyl phosphate. Lys2003 provides a ligand contact to L-aspartate. Carbamoyl phosphate-binding residues include Arg2024, His2052, and Gln2055. Arg2085 and Arg2146 together coordinate L-aspartate. Residues Met2185 and Pro2186 each contribute to the carbamoyl phosphate site.

It in the N-terminal section; belongs to the CarA family. In the 2nd section; belongs to the CarB family. The protein in the 3rd section; belongs to the metallo-dependent hydrolases superfamily. DHOase family. CAD subfamily. This sequence in the C-terminal section; belongs to the aspartate/ornithine carbamoyltransferase superfamily. ATCase family. In terms of assembly, homohexamer. Interacts with CIPC. Zn(2+) serves as cofactor. It depends on Mg(2+) as a cofactor. The cofactor is Mn(2+). Activated by MAP kinase (Erk1/2) phosphorylation just prior to the S phase of the cell cycle, when the demand for pyrimidine nucleotides is greatest, and down-regulated as the cells emerge from S phase by protein kinase A (PKA) phosphorylation. Phosphorylation at Ser-1859 by RPS6KB1 downstream of MTOR promotes oligomerization and stimulates dihydroorotase activity. Phosphorylation at Ser-1406 reduces sensitivity to feedback inhibition by UTP.

The protein localises to the cytoplasm. It is found in the nucleus. It carries out the reaction hydrogencarbonate + L-glutamine + 2 ATP + H2O = carbamoyl phosphate + L-glutamate + 2 ADP + phosphate + 2 H(+). The catalysed reaction is L-glutamine + H2O = L-glutamate + NH4(+). It catalyses the reaction hydrogencarbonate + NH4(+) + 2 ATP = carbamoyl phosphate + 2 ADP + phosphate + 2 H(+). The enzyme catalyses carbamoyl phosphate + L-aspartate = N-carbamoyl-L-aspartate + phosphate + H(+). It carries out the reaction (S)-dihydroorotate + H2O = N-carbamoyl-L-aspartate + H(+). It functions in the pathway pyrimidine metabolism; UMP biosynthesis via de novo pathway; (S)-dihydroorotate from bicarbonate: step 1/3. It participates in pyrimidine metabolism; UMP biosynthesis via de novo pathway; (S)-dihydroorotate from bicarbonate: step 2/3. Its pathway is pyrimidine metabolism; UMP biosynthesis via de novo pathway; (S)-dihydroorotate from bicarbonate: step 3/3. With respect to regulation, allosterically regulated and controlled by phosphorylation. 5-phosphoribose 1-diphosphate (PRPP) is an activator while UMP and UTP are inhibitors of the CPSase reaction. In terms of biological role, multifunctional protein that encodes the first 3 enzymatic activities of the de novo pyrimidine pathway: carbamoylphosphate synthetase (CPSase; EC 6.3.5.5), aspartate transcarbamylase (ATCase; EC 2.1.3.2) and dihydroorotase (DHOase; EC 3.5.2.3). The CPSase-function is accomplished in 2 steps, by a glutamine-dependent amidotransferase activity (GATase) that binds and cleaves glutamine to produce ammonia, followed by an ammonium-dependent carbamoyl phosphate synthetase, which reacts with the ammonia, hydrogencarbonate and ATP to form carbamoyl phosphate. The endogenously produced carbamoyl phosphate is sequestered and channeled to the ATCase active site. ATCase then catalyzes the formation of carbamoyl-L-aspartate from L-aspartate and carbamoyl phosphate. In the last step, DHOase catalyzes the cyclization of carbamoyl aspartate to dihydroorotate. The chain is Multifunctional protein CAD (Cad) from Mus musculus (Mouse).